A 177-amino-acid chain; its full sequence is ATP-dependent protease subunit HslV (177 aa).

T4 is an active-site residue. Na(+) is bound by residues S159, C162, and T165.

It belongs to the peptidase T1B family. HslV subfamily. In terms of assembly, a double ring-shaped homohexamer of HslV is capped on each side by a ring-shaped HslU homohexamer. The assembly of the HslU/HslV complex is dependent on binding of ATP.

The protein localises to the cytoplasm. It carries out the reaction ATP-dependent cleavage of peptide bonds with broad specificity.. With respect to regulation, allosterically activated by HslU binding. In terms of biological role, protease subunit of a proteasome-like degradation complex believed to be a general protein degrading machinery. In Mesorhizobium japonicum (strain LMG 29417 / CECT 9101 / MAFF 303099) (Mesorhizobium loti (strain MAFF 303099)), this protein is ATP-dependent protease subunit HslV.